The chain runs to 201 residues: uncharacterized protein (201 aa).

An N-terminal signal peptide occupies residues 1–19 (MKLIVSVFLIGCQFLNILG).

This is an uncharacterized protein from Acheta domesticus (House cricket).